An 858-amino-acid polypeptide reads, in one-letter code: Conidiophore development regulator abaA (858 aa).

Positions 1-22 are disordered; it reads MSSSLYHPRPVLSSQRYTPSPD. The segment at residues 128-221 is a DNA-binding region (TEA); it reads QKDKGGVWRR…QVVKKFFEDL (94 aa). The segment covering 500–522 has biased composition (basic and acidic residues); that stretch reads VEHQRKKEKRTKGDDRKNLDRAG. 2 disordered regions span residues 500–535 and 792–858; these read VEHQ…GDAA and TGAG…AGGW. The Nuclear localization signal signature appears at 514-521; that stretch reads DRKNLDRA. Residues 809 to 822 are compositionally biased toward polar residues; sequence SSDQTALWTQSQWA.

The protein belongs to the TEC1 family.

Its subcellular location is the nucleus. AbaA and wetA are pivotal regulators of conidiophore development and conidium maturation. They act individually and together to regulate their own expression and that of numerous other sporulation-specific genes. Binds to the sequence 5'-CATTCY-3', where Y is a pyrimidine, making both major- and minor-groove contacts. Plays a pivotal role in conidiation by regulating cell cycle pathways and other conidiation-related genes. The protein is Conidiophore development regulator abaA of Gibberella zeae (strain ATCC MYA-4620 / CBS 123657 / FGSC 9075 / NRRL 31084 / PH-1) (Wheat head blight fungus).